We begin with the raw amino-acid sequence, 88 residues long: Putative membrane protein insertion efficiency factor (88 aa).

Positions 64-88 are disordered; the sequence is GVDPVPKKSSSKKTSSTTACGCGHS.

Belongs to the UPF0161 family.

Its subcellular location is the cell inner membrane. Functionally, could be involved in insertion of integral membrane proteins into the membrane. This chain is Putative membrane protein insertion efficiency factor, found in Herminiimonas arsenicoxydans.